The sequence spans 141 residues: Large ribosomal subunit protein uL16 (141 aa).

The interval 1–23 (MLMPKRTKYRKQMKGRNRGKAHR) is disordered.

It belongs to the universal ribosomal protein uL16 family. In terms of assembly, part of the 50S ribosomal subunit.

In terms of biological role, binds 23S rRNA and is also seen to make contacts with the A and possibly P site tRNAs. This chain is Large ribosomal subunit protein uL16, found in Helicobacter pylori (strain P12).